The primary structure comprises 257 residues: Probable enoyl-CoA hydratase (257 aa).

This sequence belongs to the enoyl-CoA hydratase/isomerase family.

It carries out the reaction a (3S)-3-hydroxyacyl-CoA = a (2E)-enoyl-CoA + H2O. The enzyme catalyses a 4-saturated-(3S)-3-hydroxyacyl-CoA = a (3E)-enoyl-CoA + H2O. Its function is as follows. Could possibly oxidize fatty acids using specific components. This Rhodobacter capsulatus (strain ATCC BAA-309 / NBRC 16581 / SB1003) protein is Probable enoyl-CoA hydratase (fadB1).